A 777-amino-acid chain; its full sequence is Rho guanine nucleotide exchange factor 38 (777 aa).

Thr-34 bears the Phosphothreonine mark. Positions 35–72 (DTVVESSVSGDHSGTLRRSQSDRTEYNQKLQEKMTPQG) are disordered. Polar residues predominate over residues 37 to 52 (VVESSVSGDHSGTLRR). The segment covering 53 to 66 (SQSDRTEYNQKLQE) has biased composition (basic and acidic residues). The 192-residue stretch at 94 to 285 (KREKIIKELI…KDINVNINEL (192 aa)) folds into the DH domain. The 210-residue stretch at 327 to 536 (LKILTRGESQ…QNQVLEEIQN (210 aa)) folds into the BAR domain. Residues 582–645 (SAEELYQAKR…YSSFLKPYNP (64 aa)) enclose the SH3 1 domain. The tract at residues 673–694 (PASDSVTGTSESSIGDSSSSLS) is disordered. Positions 679–694 (TGTSESSIGDSSSSLS) are enriched in low complexity. One can recognise an SH3 2 domain in the interval 713–776 (VDEQIFYAVH…PANYLGKMTY (64 aa)).

May act as a guanine-nucleotide releasing factor. In Homo sapiens (Human), this protein is Rho guanine nucleotide exchange factor 38 (ARHGEF38).